The chain runs to 430 residues: Ribosomal protein uS12 methylthiotransferase RimO (430 aa).

The MTTase N-terminal domain occupies 4–119 (LKINFISLGC…IPVLFDIKPK (116 aa)). Positions 13, 49, 82, 141, 145, and 148 each coordinate [4Fe-4S] cluster. The region spanning 127-358 (STPKHTAYLK…SALQENITEQ (232 aa)) is the Radical SAM core domain. The TRAM domain maps to 361 to 430 (KSLIGKELDI…DKYDVVGEAE (70 aa)).

This sequence belongs to the methylthiotransferase family. RimO subfamily. It depends on [4Fe-4S] cluster as a cofactor.

The protein resides in the cytoplasm. It carries out the reaction L-aspartate(89)-[ribosomal protein uS12]-hydrogen + (sulfur carrier)-SH + AH2 + 2 S-adenosyl-L-methionine = 3-methylsulfanyl-L-aspartate(89)-[ribosomal protein uS12]-hydrogen + (sulfur carrier)-H + 5'-deoxyadenosine + L-methionine + A + S-adenosyl-L-homocysteine + 2 H(+). Functionally, catalyzes the methylthiolation of an aspartic acid residue of ribosomal protein uS12. The protein is Ribosomal protein uS12 methylthiotransferase RimO of Sulfurihydrogenibium sp. (strain YO3AOP1).